A 466-amino-acid polypeptide reads, in one-letter code: Asparagine--tRNA ligase (466 aa).

This sequence belongs to the class-II aminoacyl-tRNA synthetase family. Homodimer.

Its subcellular location is the cytoplasm. The enzyme catalyses tRNA(Asn) + L-asparagine + ATP = L-asparaginyl-tRNA(Asn) + AMP + diphosphate + H(+). This Serratia proteamaculans (strain 568) protein is Asparagine--tRNA ligase.